The chain runs to 749 residues: Patatin-like phospholipase domain-containing protein An01g04180 (749 aa).

The segment at 1-21 (MNGAEKSAAGDTYDPSTIPDY) is disordered. A helical transmembrane segment spans residues 87–107 (WPFLFTVFGWITALAFAYTLT). Positions 277-468 (LCLSGGATFA…RTDIPIKALN (192 aa)) constitute a PNPLA domain. The GXSXG signature appears at 308–312 (GTSGG). The Nucleophile role is filled by Ser-310. Asp-455 functions as the Proton acceptor in the catalytic mechanism. Residues 619-726 (AGGRPISPAP…STGSSIFEEV (108 aa)) form a disordered region. Over residues 649–664 (PLNERLDHNLPERRGD) the composition is skewed to basic and acidic residues. Residues 685–707 (SLSENSSNESAARPSSSSSSSRL) show a composition bias toward low complexity.

This sequence belongs to the PLPL family.

Its subcellular location is the membrane. Its function is as follows. Probable lipid hydrolase. The chain is Patatin-like phospholipase domain-containing protein An01g04180 from Aspergillus niger (strain ATCC MYA-4892 / CBS 513.88 / FGSC A1513).